We begin with the raw amino-acid sequence, 131 residues long: Profilin-5 (131 aa).

Cysteines 13 and 115 form a disulfide. The Involved in PIP2 interaction motif lies at 81-97 (AVIRGKKGAGGITIKKT). T111 carries the phosphothreonine modification.

The protein belongs to the profilin family. As to quaternary structure, occurs in many kinds of cells as a complex with monomeric actin in a 1:1 ratio. Post-translationally, phosphorylated by MAP kinases.

Its subcellular location is the cytoplasm. The protein localises to the cytoskeleton. In terms of biological role, binds to actin and affects the structure of the cytoskeleton. At high concentrations, profilin prevents the polymerization of actin, whereas it enhances it at low concentrations. The sequence is that of Profilin-5 from Olea europaea (Common olive).